Here is an 888-residue protein sequence, read N- to C-terminus: Molybdenum cofactor sulfurase (888 aa).

Ser-34 is subject to Phosphoserine. Residue Lys-264 is modified to N6-(pyridoxal phosphate)lysine. Cys-424 is a catalytic residue. Phosphoserine is present on residues Ser-528 and Ser-530. The MOSC domain occupies 706-867; the sequence is KQSSNSQRNA…LSVGSQVLPV (162 aa).

Belongs to the class-V pyridoxal-phosphate-dependent aminotransferase family. MOCOS subfamily. The cofactor is pyridoxal 5'-phosphate.

The catalysed reaction is Mo-molybdopterin + L-cysteine + AH2 = thio-Mo-molybdopterin + L-alanine + A + H2O. Its pathway is cofactor biosynthesis; molybdopterin biosynthesis. Functionally, sulfurates the molybdenum cofactor. Sulfation of molybdenum is essential for xanthine dehydrogenase (XDH) and aldehyde oxidase (ADO) enzymes in which molybdenum cofactor is liganded by 1 oxygen and 1 sulfur atom in active form. In vitro, the C-terminal domain is able to reduce N-hydroxylated prodrugs, such as benzamidoxime. This is Molybdenum cofactor sulfurase from Homo sapiens (Human).